Consider the following 509-residue polypeptide: Histidine--tRNA ligase, cytoplasmic (509 aa).

N-acetylalanine is present on Ala-2. The region spanning 3 to 59 (DRAALEDLVRVQGERVRGLKQQKASAEQIEEEVAKLLKLKAQLGPDEGKPKFVLKTP) is the WHEP-TRS domain. Ser-66 is subject to Phosphoserine. L-histidine is bound by residues 130–132 (DLT), Arg-157, Gln-173, Asp-177, Arg-326, and 330–331 (YY). Ser-356 carries the phosphoserine modification.

Belongs to the class-II aminoacyl-tRNA synthetase family. In terms of assembly, homodimer.

It is found in the cytoplasm. The enzyme catalyses tRNA(His) + L-histidine + ATP = L-histidyl-tRNA(His) + AMP + diphosphate + H(+). Functionally, catalyzes the ATP-dependent ligation of histidine to the 3'-end of its cognate tRNA, via the formation of an aminoacyl-adenylate intermediate (His-AMP). Plays a role in axon guidance. The chain is Histidine--tRNA ligase, cytoplasmic (HARS1) from Bos taurus (Bovine).